Here is a 415-residue protein sequence, read N- to C-terminus: Serine hydroxymethyltransferase (415 aa).

(6S)-5,6,7,8-tetrahydrofolate-binding positions include Leu-119 and 123–125; that span reads GHL. Lys-228 carries the N6-(pyridoxal phosphate)lysine modification. Position 353-355 (353-355) interacts with (6S)-5,6,7,8-tetrahydrofolate; it reads SAF.

This sequence belongs to the SHMT family. In terms of assembly, homodimer. Pyridoxal 5'-phosphate serves as cofactor.

It localises to the cytoplasm. It carries out the reaction (6R)-5,10-methylene-5,6,7,8-tetrahydrofolate + glycine + H2O = (6S)-5,6,7,8-tetrahydrofolate + L-serine. It functions in the pathway one-carbon metabolism; tetrahydrofolate interconversion. It participates in amino-acid biosynthesis; glycine biosynthesis; glycine from L-serine: step 1/1. In terms of biological role, catalyzes the reversible interconversion of serine and glycine with tetrahydrofolate (THF) serving as the one-carbon carrier. Also exhibits THF-independent aldolase activity toward beta-hydroxyamino acids, producing glycine and aldehydes, via a retro-aldol mechanism. The chain is Serine hydroxymethyltransferase from Haloarcula marismortui (strain ATCC 43049 / DSM 3752 / JCM 8966 / VKM B-1809) (Halobacterium marismortui).